The sequence spans 601 residues: Glutathione-regulated potassium-efflux system protein KefB (601 aa).

The next 13 helical transmembrane spans lie at 4–24, 29–49, 55–75, 87–107, 115–135, 152–172, 177–197, 207–227, 230–250, 268–288, 291–311, 326–346, and 356–376; these read SDLLLAGVLFLFAAVIAVPLA, IGAVLGYLLAGIAIGPWGLGF, EILHFSELGVVFLMFIIGLEL, IFGVGAAQVMLSAAILGGLLM, AAVVGGIGLAMSSTAMALQLM, VLLFQDLAVIPALALVPLLAG, HVNWLTVGMKVLAFAGMLIGG, FIASSGVREVFTAATLLLVLG, LFMEALGLSMALGTFIAGVLL, GLLLGLFFISVGMALNLGVLY, LLWVAVSVAVLVAVKMLVLYL, FAGVLSQGGEFAFVLFSLPAS, and ALLLVAVTLSMMTTPLLMKGI. An RCK N-terminal domain is found at 400–519; the sequence is KPQVIIVGFG…AGVTQFSRET (120 aa).

The protein belongs to the monovalent cation:proton antiporter 2 (CPA2) transporter (TC 2.A.37) family. KefB subfamily. In terms of assembly, interacts with the regulatory subunit KefG.

The protein localises to the cell inner membrane. Pore-forming subunit of a potassium efflux system that confers protection against electrophiles. Catalyzes K(+)/H(+) antiport. The sequence is that of Glutathione-regulated potassium-efflux system protein KefB from Klebsiella pneumoniae subsp. pneumoniae (strain ATCC 700721 / MGH 78578).